Here is a 432-residue protein sequence, read N- to C-terminus: 3-phosphoshikimate 1-carboxyvinyltransferase (432 aa).

The 3-phosphoshikimate site is built by Lys22, Ser23, and Arg27. A phosphoenolpyruvate-binding site is contributed by Lys22. Phosphoenolpyruvate-binding residues include Gly96 and Arg127. 7 residues coordinate 3-phosphoshikimate: Ser173, Ser174, Gln175, Ser201, Asp316, Asn339, and Lys343. Position 175 (Gln175) interacts with phosphoenolpyruvate. Asp316 functions as the Proton acceptor in the catalytic mechanism. Phosphoenolpyruvate is bound by residues Arg347, Arg391, and Lys416.

This sequence belongs to the EPSP synthase family. In terms of assembly, monomer.

It is found in the cytoplasm. It catalyses the reaction 3-phosphoshikimate + phosphoenolpyruvate = 5-O-(1-carboxyvinyl)-3-phosphoshikimate + phosphate. Its pathway is metabolic intermediate biosynthesis; chorismate biosynthesis; chorismate from D-erythrose 4-phosphate and phosphoenolpyruvate: step 6/7. Catalyzes the transfer of the enolpyruvyl moiety of phosphoenolpyruvate (PEP) to the 5-hydroxyl of shikimate-3-phosphate (S3P) to produce enolpyruvyl shikimate-3-phosphate and inorganic phosphate. The polypeptide is 3-phosphoshikimate 1-carboxyvinyltransferase (Histophilus somni (strain 2336) (Haemophilus somnus)).